The primary structure comprises 137 residues: Small ribosomal subunit protein uS12 (137 aa).

Belongs to the universal ribosomal protein uS12 family. In terms of assembly, part of the 30S ribosomal subunit. Contacts proteins S8 and S17. May interact with IF1 in the 30S initiation complex.

Functionally, with S4 and S5 plays an important role in translational accuracy. In terms of biological role, interacts with and stabilizes bases of the 16S rRNA that are involved in tRNA selection in the A site and with the mRNA backbone. Located at the interface of the 30S and 50S subunits, it traverses the body of the 30S subunit contacting proteins on the other side and probably holding the rRNA structure together. The combined cluster of proteins S8, S12 and S17 appears to hold together the shoulder and platform of the 30S subunit. This Lactiplantibacillus plantarum (strain ATCC BAA-793 / NCIMB 8826 / WCFS1) (Lactobacillus plantarum) protein is Small ribosomal subunit protein uS12.